A 243-amino-acid chain; its full sequence is PF03932 family protein CutC (243 aa).

It belongs to the CutC family.

It is found in the cytoplasm. The chain is PF03932 family protein CutC from Histophilus somni (strain 2336) (Haemophilus somnus).